Consider the following 634-residue polypeptide: Factor of DNA methylation 1 (634 aa).

Positions 288 to 469 form a coiled coil; that stretch reads LDEKKNLHQA…LESMNSVLMT (182 aa). Residues 349-364 are compositionally biased toward basic and acidic residues; that stretch reads ELDRQKLDEDKRKSDA. The tract at residues 349–375 is disordered; the sequence is ELDRQKLDEDKRKSDAMNKSLQLASRE.

As to quaternary structure, homodimer. Interacts with IDN2 and AGO4. Forms a complex with IDN2 and FMD2/INDL2. As to expression, highly expressed in flowers and at lower levels in roots, leaves and stems.

Forms a complex with IDN2 and FDM2/IDNL2 that is required for RNA-directed DNA methylation (RdDM) and that functions at a downstream step of the RdDM pathway. Required for de novo DNA methylation and 24 nucleotide small interfering RNA (siRNA) accumulation. Binds unmethylated but not methylated DNAs through its coiled-coil domain. May bind double-stranded RNAs (dsRNAs) with 5'-overhangs through its XS domain. However, according to, FMD1 does not bind dsRNAs. This Arabidopsis thaliana (Mouse-ear cress) protein is Factor of DNA methylation 1.